The sequence spans 581 residues: MSTTSASEAYVDDNSSWDSFHLDARLVQAIDQLGFEHPTLIQASAIPLALEEKRDIIAKASTGSGKTGAYVIPIIHNLLTDAEVESGNHHIKSIILVPTRELSNQVLQFVEKLLVYSNNRINAINLSANLSDQVVNSLLMNKPEIIISTPAKLIQVLEKNANKDLIDLSTVRNLTIDEVDLVLSYGYLEDLQKLETYLPIKKNLQTFLMSATVNDDLNDLKTRFCSRPAILKLNDEESAQNKLIQYYARTTEFDKFLLAYVIFKLNLIKGKTLVFVNNIDRGYRLKLFLEQFGIRCCILNSELPINSRLHIVEEYNKNVYNLLIATDETNDFTVEKDEQQQEESQDKKASSAKTKQSKKSKKQKKDTEYGVSRGVDFRNVACVLNFDLPTTSKAYIHRIGRTARAGKAGMALSFVLPIKEVGKHKTASLSTAKKDEKILRRIVKQQSKNGFEIKPYQFDMKQVEGFRYRSEDAFRAVTQTAIREARIKELKNELINSDKLKRFFEENPQDLASLRHDKELHPTRVQSHLKRVPDYLLPESARQDPKKIGFVPFHKNKVHKNRKKKPTGRKADPLKSFKNRK.

The short motif at 15–43 (SSWDSFHLDARLVQAIDQLGFEHPTLIQA) is the Q motif element. Residues 47–231 (PLALEEKRDI…TRFCSRPAIL (185 aa)) form the Helicase ATP-binding domain. 60–67 (ASTGSGKT) is an ATP binding site. Residues 177 to 180 (DEVD) carry the DEAD box motif. A Helicase C-terminal domain is found at 260–461 (YVIFKLNLIK…EIKPYQFDMK (202 aa)). The span at 334-349 (VEKDEQQQEESQDKKA) shows a compositional bias: basic and acidic residues. Disordered stretches follow at residues 334–368 (VEKD…KDTE) and 546–581 (KKIG…KNRK). 2 stretches are compositionally biased toward basic residues: residues 355–364 (KQSKKSKKQK) and 554–568 (HKNK…KPTG).

The protein belongs to the DEAD box helicase family. DDX56/DBP9 subfamily.

Its subcellular location is the nucleus. It localises to the nucleolus. It catalyses the reaction ATP + H2O = ADP + phosphate + H(+). Its function is as follows. ATP-binding RNA helicase involved in the biogenesis of 60S ribosomal subunits and is required for the normal formation of 25S and 5.8S rRNAs. This is ATP-dependent RNA helicase DBP9 (DBP9) from Scheffersomyces stipitis (strain ATCC 58785 / CBS 6054 / NBRC 10063 / NRRL Y-11545) (Yeast).